An 875-amino-acid chain; its full sequence is Importin subunit beta-1 (875 aa).

Methionine 1 bears the N-acetylmethionine mark. 5 HEAT repeats span residues 2–31 (ELIT…AAVE), 33–64 (LPTF…IRLL), 84–122 (ANAR…EIPV), 128–159 (LIPQ…ICQD), and 169–201 (SNEI…LNSL). Phosphoserine is present on serine 12. An Importin N-terminal domain is found at 21-100 (AQKFLERAAV…KNYVLQTLGT (80 aa)). At lysine 210 the chain carries N6-acetyllysine. 14 HEAT repeats span residues 211–246 (ESER…IMSL), 252–301 (ETYM…EAAE), 313–359 (YAKG…TCCE), 363–393 (VPHV…GSIL), 401–437 (LKPL…ICEL), 448–484 (LAPL…YEAA), 499–536 (SSSF…EIVK), 543–591 (YPAV…QNVL), 599–638 (ALQI…VEVL), 643–680 (LKYM…CRAL), 685–723 (LPFC…TLAI), 731–775 (LEVV…VQGL), 785–828 (DVML…CTAF), and 830–872 (KDVL…RKLK). Residues 285–461 (VCDEEMDLAI…LQCLIEGLSA (177 aa)) are essential for high affinity interaction with RPL23A. Residues 328–341 (TLTKQDENDDDDDW) form an IAB-binding region. The ran-GTP binding stretch occupies residues 333-418 (DENDDDDDWN…MPTLIELMKD (86 aa)). Lysine 834 and lysine 866 each carry N6-acetyllysine.

The protein belongs to the importin beta family. Importin beta-1 subfamily. In terms of assembly, forms a complex with an importin alpha subunit. Interacts with XPO1. Forms a heterodimer with IPO7. The KPNB1/IPO7 heterodimer interacts with H1 histone. Interacts with SNUPN. Interacts with H2A, H2B, H3 and H4 histones. Component of an import snRNP complex composed of KPNB1, SNUPN, SMN1 and ZNF259. Component of a nuclear export receptor complex composed of KPNB1, Ran, SNUPN and XPO1. Interacts with SRY. Interacts with PRKCI/atypical protein kinase C iota. Interacts with KPNA2. Interacts with KPNA7. Interacts with SNAI1 (via zinc fingers) and SNAI2 (via zinc fingers). Interacts with SLC35G1 and STIM1. Interacts with DCAF8. Interacts with RAN. Interacts with NUMA1 (via C-terminus); this interaction is inhibited by RanGTP. Interacts with ZBED1/hDREF; required for nuclear import of ZBED1/hDREF. Interacts with SRP19. Interacts with RPL23A (via BIB domain), RPS7 and RPL5. Mono-ADP-ribosylated by PARP16.

It is found in the cytoplasm. Its subcellular location is the nucleus envelope. Functions in nuclear protein import, either in association with an adapter protein, like an importin-alpha subunit, which binds to nuclear localization signals (NLS) in cargo substrates, or by acting as autonomous nuclear transport receptor. Acting autonomously, serves itself as NLS receptor. Docking of the importin/substrate complex to the nuclear pore complex (NPC) is mediated by KPNB1 through binding to nucleoporin FxFG repeats and the complex is subsequently translocated through the pore by an energy requiring, Ran-dependent mechanism. At the nucleoplasmic side of the NPC, Ran binds to importin-beta and the three components separate and importin-alpha and -beta are re-exported from the nucleus to the cytoplasm where GTP hydrolysis releases Ran from importin. The directionality of nuclear import is thought to be conferred by an asymmetric distribution of the GTP- and GDP-bound forms of Ran between the cytoplasm and nucleus. Mediates autonomously the nuclear import of ribosomal proteins RPL23A, RPS7 and RPL5. In association with IPO7, mediates the nuclear import of H1 histone. In vitro, mediates nuclear import of H2A, H2B, H3 and H4 histones. Imports MRTFA, SNAI1 and PRKCI into the nucleus. The polypeptide is Importin subunit beta-1 (Kpnb1) (Rattus norvegicus (Rat)).